Consider the following 249-residue polypeptide: Uridylate kinase (249 aa).

Residue 23–26 coordinates ATP; the sequence is KISG. Residues 31–36 are involved in allosteric activation by GTP; that stretch reads GDQGFG. Gly65 provides a ligand contact to UMP. ATP-binding residues include Gly66 and Arg70. UMP-binding positions include Asp85 and 146–153; that span reads TGNPYFTT. Thr173, Tyr179, and Asp182 together coordinate ATP.

It belongs to the UMP kinase family. As to quaternary structure, homohexamer.

The protein localises to the cytoplasm. The catalysed reaction is UMP + ATP = UDP + ADP. It functions in the pathway pyrimidine metabolism; CTP biosynthesis via de novo pathway; UDP from UMP (UMPK route): step 1/1. Its activity is regulated as follows. Allosterically activated by GTP. Inhibited by UTP. In terms of biological role, catalyzes the reversible phosphorylation of UMP to UDP. This is Uridylate kinase from Jannaschia sp. (strain CCS1).